The primary structure comprises 241 residues: Phosphatidylcholine synthase (241 aa).

Over 1–15 (MKIFNYKRVPYAEIR) the chain is Cytoplasmic. Residues 16 to 36 (AFSVHILTASGSFLAFLGVVA) traverse the membrane as a helical segment. Topologically, residues 37–41 (ASEHR) are periplasmic. A helical membrane pass occupies residues 42 to 62 (FVDMFWWLGLALLVDGIDGPI). Over 63-76 (ARKVRVKEVLPNWS) the chain is Cytoplasmic. A helical membrane pass occupies residues 77 to 97 (GDTLDNIIDYVTYVLLPAFAL). Topologically, residues 98–100 (YQS) are periplasmic. Residues 101–121 (GMIGEPLSFVAAGMIVVSSAI) traverse the membrane as a helical segment. Residues 122 to 133 (YYADMGMKTDEY) lie on the Cytoplasmic side of the membrane. Residues 134-154 (FFSGFPVVWNMVVFTLFVMDA) traverse the membrane as a helical segment. The Periplasmic segment spans residues 155 to 159 (SATTA). The chain crosses the membrane as a helical span at residues 160–180 (MTVVTVSVFLTFLPINFLHPV). Residues 181–187 (RVKRLRP) lie on the Cytoplasmic side of the membrane. The helical transmembrane segment at 188 to 208 (LNLLVVAIWCALGGYALLMHF) threads the bilayer. Residues 209-214 (ETPTWA) lie on the Periplasmic side of the membrane. Residues 215 to 235 (VIAFVASGIYLYCIGGILQFF) traverse the membrane as a helical segment. Topologically, residues 236-241 (PSLGAK) are cytoplasmic.

It belongs to the CDP-alcohol phosphatidyltransferase class-I family. It depends on Mn(2+) as a cofactor.

It is found in the cell inner membrane. It catalyses the reaction a CDP-1,2-diacyl-sn-glycerol + choline = a 1,2-diacyl-sn-glycero-3-phosphocholine + CMP + H(+). Functionally, condenses choline with CDP-diglyceride to produce phosphatidylcholine and CMP. Affects motility, biofilm formation and virulence of this bacterium when there is a complete loss of phosphatidylcholine formation due to absence of both the synthase (pcs) and the methylation (pmtA) pathways. The chain is Phosphatidylcholine synthase from Agrobacterium fabrum (strain C58 / ATCC 33970) (Agrobacterium tumefaciens (strain C58)).